The sequence spans 423 residues: Glucose-1-phosphate adenylyltransferase (423 aa).

Alpha-D-glucose 1-phosphate is bound by residues tyrosine 108, glycine 173, 188 to 189 (EK), and serine 207.

Belongs to the bacterial/plant glucose-1-phosphate adenylyltransferase family. In terms of assembly, homotetramer.

The catalysed reaction is alpha-D-glucose 1-phosphate + ATP + H(+) = ADP-alpha-D-glucose + diphosphate. The protein operates within glycan biosynthesis; glycogen biosynthesis. Involved in the biosynthesis of ADP-glucose, a building block required for the elongation reactions to produce glycogen. Catalyzes the reaction between ATP and alpha-D-glucose 1-phosphate (G1P) to produce pyrophosphate and ADP-Glc. In Francisella tularensis subsp. novicida (strain U112), this protein is Glucose-1-phosphate adenylyltransferase.